A 944-amino-acid chain; its full sequence is 2-oxoglutarate dehydrogenase E1 component (944 aa).

Residues 918-944 (SSTAEGDPTVHKKEQERIVSDSLTRKN) are disordered. Positions 925–936 (PTVHKKEQERIV) are enriched in basic and acidic residues.

The protein belongs to the alpha-ketoglutarate dehydrogenase family. Homodimer. Part of the 2-oxoglutarate dehydrogenase (OGDH) complex composed of E1 (2-oxoglutarate dehydrogenase), E2 (dihydrolipoamide succinyltransferase) and E3 (dihydrolipoamide dehydrogenase); the complex contains multiple copies of the three enzymatic components (E1, E2 and E3). Requires thiamine diphosphate as cofactor.

The enzyme catalyses N(6)-[(R)-lipoyl]-L-lysyl-[protein] + 2-oxoglutarate + H(+) = N(6)-[(R)-S(8)-succinyldihydrolipoyl]-L-lysyl-[protein] + CO2. E1 component of the 2-oxoglutarate dehydrogenase (OGDH) complex which catalyzes the decarboxylation of 2-oxoglutarate, the first step in the conversion of 2-oxoglutarate to succinyl-CoA and CO(2). This chain is 2-oxoglutarate dehydrogenase E1 component, found in Bacillus pumilus (strain SAFR-032).